Consider the following 628-residue polypeptide: Chaperone protein HtpG (628 aa).

An a; substrate-binding region spans residues 1–339 (MSNNQQTLGF…SNDLPLNVSR (339 aa)). The segment at 340–556 (EILQDNKTTA…NDQMTTQMAK (217 aa)) is b. Residues 557–628 (LFAMSGQPVP…IKRVNTLLAG (72 aa)) form a c region.

It belongs to the heat shock protein 90 family. Homodimer.

It is found in the cytoplasm. Its function is as follows. Molecular chaperone. Has ATPase activity. This chain is Chaperone protein HtpG, found in Actinobacillus succinogenes (strain ATCC 55618 / DSM 22257 / CCUG 43843 / 130Z).